We begin with the raw amino-acid sequence, 802 residues long: MSEQKEIAMQVSGMTCAACAARIEKGLKRMPGVTDANVNLATETSNVIYDPAETGTAAIQEKIEKLGYHVVTEKAEFDIEGMTCAACANRIEKRLNKIEGVANAPVNFALETVTVEYNPKEASVSDLKEAVDKLGYKLKLKGEQDSEAAAKKKEERKQTARLIFSAVLSFPLLWAMVSHFTFTSFIWVPDIFLNPWMQFALATPVQFLIGWPFYVGAYKALRNKSANMDVLVALGTTAAYAYSLYLTFQSIGSHGHTDGLYYETSAILLTLILLGKLFETKAKGRSSDAIKKLMKLQAKTATVVRDGQEQIIPIDEVLVNDIVYVKPGERIPVDGEVVEGRSAVDESMITGESLPVDKNPGDSVTGSTVNANGFLKIKAVNVGKDTALSHIIKIVEEAQGSKAPIQRLADQISGIFVPIVLGIAVLTFLIWYLWAAPGDFAEAISKFIAVLVIACPCALGLATPTSIMAGSGRAAEFGILFKGGEHLEKTHRLDTIVLDKTGTVTNGKPRLTDAIPFGRFEEKDLLQFAAAAETGSEHPLGEAIIAGVKDKGLEIPKLTRFEAKVGAGILAEAGGKSILVGTRKLMESEQVEHGALLAQMEELEAEGKTVMLVSIDGEAAGLVAVADTIKDTSRKAVARLKELGLDVIMMTGDNRRTAEAIAKEAGIANIIAEVLPEQKAAEIARLQKEGRQTAMVGDGINDAPALATADIGMAIGTGTDIAMETADITLIRGDLNSIADAIRMSRLTMKNIKQNLFWALGYNSLGIPIAALGFLAPWIAGAAMAFSSVSVVLNALRLQKVK.

HMA domains lie at 5 to 71 and 73 to 139; these read KEIA…YHVV and EKAE…YKLK. Cu(+) contacts are provided by C16, C19, C84, and C87. The next 6 membrane-spanning stretches (helical) occupy residues 162–181, 196–218, 230–249, 259–278, 412–434, and 447–469; these read LIFS…SHFT, WMQF…VGAY, VLVA…LTFQ, GLYY…GKLF, ISGI…WYLW, and FIAV…SIMA. The 4-aspartylphosphate intermediate role is filled by D499. D698 and D702 together coordinate Mg(2+). The next 2 membrane-spanning stretches (helical) occupy residues 756–775 and 779–796; these read LFWA…LGFL and IAGA…LNAL.

It belongs to the cation transport ATPase (P-type) (TC 3.A.3) family. Type IB subfamily. As to quaternary structure, monomer at sub-stoichiometric copper concentrations. Homodimer at higher copper concentrations. Forms a heterodimer (electrostatic interactions) with CopZ during the transfer of Cu(+).

It localises to the cell membrane. It catalyses the reaction Cu(+)(in) + ATP + H2O = Cu(+)(out) + ADP + phosphate + H(+). In terms of biological role, involved in copper export. This Bacillus subtilis (strain 168) protein is Copper-exporting P-type ATPase (copA).